We begin with the raw amino-acid sequence, 132 residues long: Ubiquinol-cytochrome c reductase complex assembly factor 4 (132 aa).

The N-terminal stretch at 1-15 (MNRVLCAPAAGAVRA) is a signal peptide. Residues 16–78 (LRLIGWASRS…GKGHQRPWWK (63 aa)) are Mitochondrial matrix-facing. The disordered stretch occupies residues 29-72 (LPGSRDRAHPAAEEEDDPDRPIEFSSSKANPHRWSVGHTMGKGH). A helical transmembrane segment spans residues 79–95 (VLPLSCFLVALIIWCYL). The Mitochondrial intermembrane portion of the chain corresponds to 96-132 (REESEADQWLRQVWGEVPEPSDRSEEPETPAAYRART). Residues 110–132 (GEVPEPSDRSEEPETPAAYRART) form a disordered region.

It belongs to the UQCC4 family. Forms a complex, named COMB/coordinator of mitochondrial CYTB biogenesis, composed of UQCC1, UQCC2, UQCC4, UQCC5 and UQCC6; stabilizes nascent cytochrome b/MT-CYB and promotes its membrane insertion. Forms a complex, named COMA, composed of UQCC1, UQCC2 and UQCC4; activates MT-CYB translation. Forms a complex, named COMC, composed of UQCC1, UQCC2; UQCC3 and UQCC4; mediates MT-CYB hemylation and association with the first nuclear-encoded complex III subunit UQCRQ. Complexes COMA and COMB are bound to the mitochondrion inner membrane by UQCC4.

The protein localises to the mitochondrion inner membrane. Its function is as follows. Required for the assembly and stability of the mitochondrial ubiquinol-cytochrome c reductase complex (complex III (CIII) or cytochrome b-c1 complex), a multisubunit transmembrane complex that is part of the mitochondrial electron transport chain (ETC) which drives oxidative phosphorylation. The chain is Ubiquinol-cytochrome c reductase complex assembly factor 4 from Homo sapiens (Human).